The primary structure comprises 279 residues: Acetylglutamate kinase (279 aa).

Substrate is bound by residues 64-65, R86, and N177; that span reads GG.

The protein belongs to the acetylglutamate kinase family. ArgB subfamily.

The protein resides in the cytoplasm. It carries out the reaction N-acetyl-L-glutamate + ATP = N-acetyl-L-glutamyl 5-phosphate + ADP. The protein operates within amino-acid biosynthesis; L-arginine biosynthesis; N(2)-acetyl-L-ornithine from L-glutamate: step 2/4. Functionally, catalyzes the ATP-dependent phosphorylation of N-acetyl-L-glutamate. This Campylobacter jejuni subsp. doylei (strain ATCC BAA-1458 / RM4099 / 269.97) protein is Acetylglutamate kinase.